The following is a 133-amino-acid chain: Small ribosomal subunit protein uS8 (133 aa).

It belongs to the universal ribosomal protein uS8 family. Part of the 30S ribosomal subunit. Contacts proteins S5 and S12.

One of the primary rRNA binding proteins, it binds directly to 16S rRNA central domain where it helps coordinate assembly of the platform of the 30S subunit. The polypeptide is Small ribosomal subunit protein uS8 (Orientia tsutsugamushi (strain Ikeda) (Rickettsia tsutsugamushi)).